Reading from the N-terminus, the 504-residue chain is Zinc finger protein AEBP2 (504 aa).

The segment at M1–S219 is disordered. The residue at position 2 (A2) is an N-acetylalanine. The segment covering R16 to R30 has biased composition (low complexity). A phosphoserine mark is found at S18, S21, and S24. A compositionally biased stretch (acidic residues) spans P36–A49. Residues G59–E69 are compositionally biased toward gly residues. Positions G86–S110 are enriched in acidic residues. The segment covering S129 to G140 has biased composition (low complexity). Phosphoserine is present on S131. The span at G142–G153 shows a compositional bias: basic and acidic residues. Gly residues-rich tracts occupy residues P154–S168 and G178–S189. S199, S203, and S204 each carry phosphoserine. Residues M202–V287 form an interaction with RBBP4 region. The segment at Y254–H279 adopts a C2H2-type 1 zinc-finger fold. Residues K293–H315 form a C2H2-type 2; degenerate zinc finger. Residues F321 to H345 form a C2H2-type 3 zinc finger. The segment covering H345–P358 has biased composition (polar residues). The segment at H345–P387 is disordered. Residues M370–P385 show a composition bias toward basic residues. A Phosphoserine modification is found at S383. An interaction with SUZ12 region spans residues R400–S471. Positions T488–R504 are important for nucleosome binding activity of the PRC2 complex.

The protein belongs to the AEBP2/jing C2H2-type zinc-finger family. As to quaternary structure, self-associates. Associates with the PRC2 complex, which consists of the core components EED, EZH1 or EZH2, SUZ12, and RBBP4, and various combinations of accessory subunits including AEBP2, JARID2, PHF19, MTF2 and EPOP. Found in a monomeric PRC2.2 (class 2) complex consisting of at least SUZ12, RBBP4, AEBP2 and JARID2. Within the PRC2 complex, interacts directly with SUZ12; competes with PHF19 for SUZ12 binding. Interacts with EED, EZH2, and RBBP4. May also interact with RBBP7. Expressed in brain, brown adipose tissue, white adipose tissue, heart, kidney, lung, skeletal muscle, small intestine and spleen. Expressed at low levels in liver.

Its subcellular location is the nucleus. Its function is as follows. Acts as an accessory subunit for the core Polycomb repressive complex 2 (PRC2), which mediates histone H3K27 (H3K27me3) trimethylation on chromatin leading to transcriptional repression of the affected target gene. Plays a role in nucleosome localization of the PRC2 complex. This Mus musculus (Mouse) protein is Zinc finger protein AEBP2 (Aebp2).